The sequence spans 368 residues: 4-hydroxy-3-methylbut-2-en-1-yl diphosphate synthase (flavodoxin) (368 aa).

4 residues coordinate [4Fe-4S] cluster: cysteine 271, cysteine 274, cysteine 306, and glutamate 313.

It belongs to the IspG family. The cofactor is [4Fe-4S] cluster.

The catalysed reaction is (2E)-4-hydroxy-3-methylbut-2-enyl diphosphate + oxidized [flavodoxin] + H2O + 2 H(+) = 2-C-methyl-D-erythritol 2,4-cyclic diphosphate + reduced [flavodoxin]. The protein operates within isoprenoid biosynthesis; isopentenyl diphosphate biosynthesis via DXP pathway; isopentenyl diphosphate from 1-deoxy-D-xylulose 5-phosphate: step 5/6. Functionally, converts 2C-methyl-D-erythritol 2,4-cyclodiphosphate (ME-2,4cPP) into 1-hydroxy-2-methyl-2-(E)-butenyl 4-diphosphate. This is 4-hydroxy-3-methylbut-2-en-1-yl diphosphate synthase (flavodoxin) from Buchnera aphidicola subsp. Acyrthosiphon pisum (strain APS) (Acyrthosiphon pisum symbiotic bacterium).